A 30-amino-acid chain; its full sequence is Hementerin (30 aa).

Ca(2+) is required as a cofactor.

The protein resides in the secreted. Fibrino(geno)lytic activity inhibited by EDTA but not by PMSF, E-64, 6-AHA and aprotinin. Cleaves fibrinogen Aalpha (FGA), gamma (FGG) and Bbeta (FGB) chains. Degrades cross-linked fibrin. Has no amidolytic, plasminogenolytic or caseinolytic activity. Inhibits platelet aggregation induced by collagen (IC(50)=7.5ug/ml) and various other agonists, presumably via activation of a nitridergic pathway. Inhibition is accompanied by reduced ATP release from and surface expression of SELP and CD63 on platelets as well as increased intracellular levels of Ca(2+), cGMP and nitric oxide synthase activity. The polypeptide is Hementerin (Haementeria depressa (Leech)).